The following is a 199-amino-acid chain: Charged multivesicular body protein 1b (199 aa).

Positions 26–48 (DKEEKAEKAKIKKAIQKGNMEVA) form a coiled coil. Positions 132–156 (MEDTMSSTTTLTTPQNQVDMLLQEM) are interaction with IST1. The tract at residues 167-199 (ELPQGQTGSVGTSVASAEQDELSQRLARLRDQV) is disordered. A compositionally biased stretch (polar residues) spans 170–182 (QGQTGSVGTSVAS). An interaction with SPAST region spans residues 174-199 (GSVGTSVASAEQDELSQRLARLRDQV). Positions 178-199 (TSVASAEQDELSQRLARLRDQV) form a coiled coil. The interaction with VPS4A, MITD1 and STAMBP stretch occupies residues 180 to 196 (VASAEQDELSQRLARLR). Residues 180–199 (VASAEQDELSQRLARLRDQV) are interaction with VTA1. Residues 183–199 (AEQDELSQRLARLRDQV) are interaction with VPS4B. The MIT-interacting motif signature appears at 186 to 196 (DELSQRLARLR).

Belongs to the SNF7 family. As to quaternary structure, probable peripherally associated component of the endosomal sorting required for transport complex III (ESCRT-III). ESCRT-III components are thought to multimerize to form a flat lattice on the perimeter membrane of the endosome. Several assembly forms of ESCRT-III may exist that interact and act sequentially. Interacts with CHMP1A. Interacts with VTA1; the interaction probably involves the open conformation of CHMP1B. Interacts with CHMP2A. Interacts with VPS4A; the interaction is direct. Interacts with VPS4B; the interaction is direct. Interacts with SPAST (via MIT domain); the interaction is direct. Interacts with IST1. Interacts with MITD1. Interacts with STAMBP. As to expression, widely expressed. Expressed in pancreas, kidney, skeletal muscle, liver, lung, placenta and brain.

The protein resides in the cytoplasm. It is found in the cytosol. It localises to the endosome. The protein localises to the late endosome membrane. In terms of biological role, probable peripherally associated component of the endosomal sorting required for transport complex III (ESCRT-III) which is involved in multivesicular bodies (MVBs) formation and sorting of endosomal cargo proteins into MVBs. MVBs contain intraluminal vesicles (ILVs) that are generated by invagination and scission from the limiting membrane of the endosome and mostly are delivered to lysosomes enabling degradation of membrane proteins, such as stimulated growth factor receptors, lysosomal enzymes and lipids. The MVB pathway appears to require the sequential function of ESCRT-O, -I,-II and -III complexes. ESCRT-III proteins mostly dissociate from the invaginating membrane before the ILV is released. The ESCRT machinery also functions in topologically equivalent membrane fission events, such as the terminal stages of cytokinesis and the budding of enveloped viruses (HIV-1 and other lentiviruses). ESCRT-III proteins are believed to mediate the necessary vesicle extrusion and/or membrane fission activities, possibly in conjunction with the AAA ATPase VPS4. Involved in cytokinesis. Involved in recruiting VPS4A and/or VPS4B and SPAST to the midbody of dividing cells. Involved in HIV-1 p6- and p9-dependent virus release. This Homo sapiens (Human) protein is Charged multivesicular body protein 1b (CHMP1B).